A 202-amino-acid polypeptide reads, in one-letter code: Small ribosomal subunit protein uS5 (202 aa).

Residues 1–13 show a composition bias toward gly residues; the sequence is MPGQQRRGGGSGG. The segment at 1 to 31 is disordered; the sequence is MPGQQRRGGGSGGSDRRERRDRSGSGPAQEK. The span at 14–23 shows a compositional bias: basic and acidic residues; it reads SDRRERRDRS. An S5 DRBM domain is found at 34-97; it reads YVERVVAINR…EEAKKHFFKV (64 aa).

It belongs to the universal ribosomal protein uS5 family. In terms of assembly, part of the 30S ribosomal subunit. Contacts proteins S4 and S8.

Its function is as follows. With S4 and S12 plays an important role in translational accuracy. In terms of biological role, located at the back of the 30S subunit body where it stabilizes the conformation of the head with respect to the body. The protein is Small ribosomal subunit protein uS5 of Frankia casuarinae (strain DSM 45818 / CECT 9043 / HFP020203 / CcI3).